A 422-amino-acid chain; its full sequence is MFSLHFVDEAFNEVFAGNGGHGIVAFRREKYVAFGGPAGGNGGKGGSVIFVGDKDETTLLKLKYQKHLKAPHGINGKNKGQNGANAPHLYVKVPLGTVFYTADNKFLGEILYDQQTLVIAKGGKGGKGNKALATFKNQAPSYAEKGDLGESFKIKTELKVLADIGLLGFPSVGKSSLISAISKAQPKVASYPFTTIKPHLGVVEVDGFSFVVADLPGLIANAHLGCGMGIQFLKHIERCRVLVHILSMESANPYQDFQTLNQELSQYNPQLLLKKQIIVTNKMDLPDALQKLTLLKQQIKDQPIIPLSLVSFDNLETLKYEMSSLLQNTPLEVAPNKNNDFKLYTLPDNQNTISVIKESDSVFVVSGKQVETFFHRTDFNNEEAVKRFNRILKKIGMEEQLQKQGAKPGDQVKICDRLFYFL.

Residues 4–161 (LHFVDEAFNE…FKIKTELKVL (158 aa)) enclose the Obg domain. Positions 162 to 327 (ADIGLLGFPS…LKYEMSSLLQ (166 aa)) constitute an OBG-type G domain. Residues 168–175 (GFPSVGKS), 193–197 (FTTIK), 214–217 (DLPG), 281–284 (NKMD), and 308–310 (SLV) each bind GTP. Ser175 and Thr195 together coordinate Mg(2+). The OCT domain occupies 345–422 (TLPDNQNTIS…KICDRLFYFL (78 aa)).

Belongs to the TRAFAC class OBG-HflX-like GTPase superfamily. OBG GTPase family. Monomer. The cofactor is Mg(2+).

It is found in the cytoplasm. Functionally, an essential GTPase which binds GTP, GDP and possibly (p)ppGpp with moderate affinity, with high nucleotide exchange rates and a fairly low GTP hydrolysis rate. Plays a role in control of the cell cycle, stress response, ribosome biogenesis and in those bacteria that undergo differentiation, in morphogenesis control. This is GTPase Obg from Onion yellows phytoplasma (strain OY-M).